The primary structure comprises 396 residues: Elongation factor Tu (396 aa).

The tr-type G domain occupies 10–206 (KPHVNVGTIG…ALDSFIPEPT (197 aa)). The tract at residues 19-26 (GHVDHGKT) is G1. Residue 19–26 (GHVDHGKT) participates in GTP binding. Thr-26 is a Mg(2+) binding site. Residues 60–64 (GITIS) are G2. Residues 81–84 (DCPG) are G3. Residues 81 to 85 (DCPGH) and 136 to 139 (NKAD) contribute to the GTP site. Residues 136–139 (NKAD) are G4. The segment at 174–176 (SAR) is G5.

The protein belongs to the TRAFAC class translation factor GTPase superfamily. Classic translation factor GTPase family. EF-Tu/EF-1A subfamily. As to quaternary structure, monomer.

The protein localises to the cytoplasm. The catalysed reaction is GTP + H2O = GDP + phosphate + H(+). GTP hydrolase that promotes the GTP-dependent binding of aminoacyl-tRNA to the A-site of ribosomes during protein biosynthesis. This is Elongation factor Tu from Xanthomonas euvesicatoria pv. vesicatoria (strain 85-10) (Xanthomonas campestris pv. vesicatoria).